We begin with the raw amino-acid sequence, 407 residues long: Serine/threonine transporter SstT (407 aa).

Transmembrane regions (helical) follow at residues 10 to 30, 42 to 62, 81 to 101, 141 to 161, 179 to 199, 218 to 238, 245 to 267, 288 to 308, and 316 to 336; these read AKGNLIIQICAGIALGILIGI, LGILFTSALKAIAPMLVFILI, IIILYIVGTFLASACAILANF, ALSSGNYLGILTWAIAGGAAL, VLKIVKFVVKLAPFGIFGLVA, ILLVATMLFVTFVINALIVFF, FPLIFICLRHSAFFAFFTRSSAA, ISIPLGATINMAGAAVTIAIL, and VGIEISLLQAFLLSIIATFAA.

Belongs to the dicarboxylate/amino acid:cation symporter (DAACS) (TC 2.A.23) family.

The protein localises to the cell inner membrane. The catalysed reaction is L-serine(in) + Na(+)(in) = L-serine(out) + Na(+)(out). It carries out the reaction L-threonine(in) + Na(+)(in) = L-threonine(out) + Na(+)(out). Its function is as follows. Involved in the import of serine and threonine into the cell, with the concomitant import of sodium (symport system). The protein is Serine/threonine transporter SstT of Campylobacter jejuni subsp. doylei (strain ATCC BAA-1458 / RM4099 / 269.97).